We begin with the raw amino-acid sequence, 314 residues long: Glyceraldehyde-3-phosphate dehydrogenase A, chloroplastic (314 aa).

NADP(+)-binding positions include 5-6 (RI), Asp-29, and Arg-74. A disulfide bridge links Cys-13 with Cys-283. D-glyceraldehyde 3-phosphate is bound by residues 147 to 149 (SCT), Thr-178, Arg-193, 206 to 207 (TG), and Arg-229. The Nucleophile role is filled by Cys-148. Asn-311 contacts NADP(+).

This sequence belongs to the glyceraldehyde-3-phosphate dehydrogenase family. Homotetramer.

The protein resides in the plastid. Its subcellular location is the chloroplast. The enzyme catalyses D-glyceraldehyde 3-phosphate + phosphate + NADP(+) = (2R)-3-phospho-glyceroyl phosphate + NADPH + H(+). Its pathway is carbohydrate biosynthesis; Calvin cycle. In Scenedesmus vacuolatus (Green alga), this protein is Glyceraldehyde-3-phosphate dehydrogenase A, chloroplastic (GapA).